A 337-amino-acid chain; its full sequence is Hsp90 co-chaperone Cdc37-like 1 (337 aa).

The segment covering 1–11 has biased composition (pro residues); sequence MEQPWPPPGPW. Residues 1–42 form a disordered region; that stretch reads MEQPWPPPGPWSLPRAEGEAEEENDLDVFPSSPRCPQLPGGS. The segment at 2–171 is self-association; sequence EQPWPPPGPW…YEQKIRHFGM (170 aa). 2 positions are modified to phosphoserine: serine 32 and serine 88. Residues 85–122 adopt a coiled-coil conformation; the sequence is NSESLDQEHAKAQIAVSELRQREEEWRQKEEALVQREK. The interval 147–277 is self-association and interaction with Hsp90; that stretch reads KDTEDEDKSE…SRVRLYSQSQ (131 aa). An interaction with Hsp70 region spans residues 267–337; that stretch reads KSRVRLYSQS…DDEPKMMDTV (71 aa). Positions 278 to 337 are required for interaction with STIP1; the sequence is SFQPMTVQNHVPHSGVGSIGLLESLPQNPDYLQYSINTALCSLNSVVHKEDDEPKMMDTV.

It belongs to the CDC37 family. In terms of assembly, self-associates. Forms complexes with Hsp70 and Hsp90. Interacts with CDC37, FKBP4, PPID and STIP1.

Its subcellular location is the cytoplasm. Its function is as follows. Co-chaperone that binds to numerous proteins and promotes their interaction with Hsp70 and Hsp90. The protein is Hsp90 co-chaperone Cdc37-like 1 (CDC37L1) of Pongo abelii (Sumatran orangutan).